The following is a 732-amino-acid chain: X-ray repair cross-complementing protein 5 (732 aa).

Residues 9–161 (AVVLCVDVGV…CNLKKSGISL (153 aa)) form the VWFA domain. The segment at 138-165 (LSSPFSQDQLDVIICNLKKSGISLQFFL) is leucine-zipper. Lys195 participates in a covalent cross-link: Glycyl lysine isopeptide (Lys-Gly) (interchain with G-Cter in SUMO2). Residues 253 to 453 (IGPNLSIKIV…CTPTEAQLSA (201 aa)) form the Ku domain. Ser258 bears the Phosphoserine mark. The residue at position 265 (Lys265) is an N6-acetyllysine. Ser318 is subject to Phosphoserine. Lys332 carries the N6-acetyllysine modification. Glycyl lysine isopeptide (Lys-Gly) (interchain with G-Cter in SUMO2) cross-links involve residues Lys532 and Lys534. Position 535 is a phosphothreonine (Thr535). Residues Lys567 and Lys569 each participate in a glycyl lysine isopeptide (Lys-Gly) (interchain with G-Cter in SUMO2) cross-link. A phosphoserine; by PRKDC mark is found at Ser578, Ser580, and Ser581. An N6-acetyllysine modification is found at Lys666. Glycyl lysine isopeptide (Lys-Gly) (interchain with G-Cter in SUMO2) cross-links involve residues Lys670 and Lys689. Residues 708-732 (PKDKAKEDTTGPEEAGDVDDLLDMI) are disordered. A Phosphothreonine; by PRKDC modification is found at Thr716. The span at 717-732 (TGPEEAGDVDDLLDMI) shows a compositional bias: acidic residues. An EEXXXDL motif motif is present at residues 720–728 (EEAGDVDDL).

This sequence belongs to the ku80 family. In terms of assembly, heterodimer composed of XRCC5/Ku80 and XRCC6/Ku70. Component of the core long-range non-homologous end joining (NHEJ) complex (also named DNA-PK complex) composed of PRKDC, LIG4, XRCC4, XRCC6/Ku70, XRCC5/Ku86 and NHEJ1/XLF. Additional component of the NHEJ complex includes PAXX. Following autophosphorylation, PRKDC dissociates from DNA, leading to formation of the short-range NHEJ complex, composed of LIG4, XRCC4, XRCC6/Ku70, XRCC5/Ku86 and NHEJ1/XLF. The XRCC5-XRCC6 dimer also associates with NAA15, and this complex displays DNA binding activity towards the osteocalcin FGF response element (OCFRE). In addition, XRCC5 binds to the osteoblast-specific transcription factors MSX2 and RUNX2. Interacts with ELF3. Interacts with APLF (via KBM motif). The XRCC5/XRCC6 dimer associates in a DNA-dependent manner with APEX1. Identified in a complex with DEAF1 and XRCC6. Interacts with NR4A3; the DNA-dependent protein kinase complex DNA-PK phosphorylates and activates NR4A3 and prevents NR4A3 ubiquitinylation and degradation. Interacts with RNF138. Interacts with CYREN (via KBM motif). Interacts with WRN (via KBM motif). Interacts (via N-terminus) with HSF1 (via N-terminus); this interaction is direct and prevents XRCC5/XRCC6 heterodimeric binding and non-homologous end joining (NHEJ) repair activities induced by ionizing radiation (IR). Interacts with DHX9; this interaction occurs in a RNA-dependent manner. Part of the HDP-RNP complex composed of at least HEXIM1, PRKDC, XRCC5, XRCC6, paraspeckle proteins (SFPQ, NONO, PSPC1, RBM14, and MATR3) and NEAT1 RNA. Interacts with ERCC6. Interacts with ATF7. The XRCC5-XRCC6 dimer associates with ALKBH2. Interacts with TPRN; TPRN interacts with a number of DNA damage response proteins, is recruited to sites of DNA damage and may play a role in DNA damage repair. Interacts with ERCC6L2. ADP-ribosylated by PARP3. In terms of processing, phosphorylated on serine residues. Phosphorylation by PRKDC may enhance helicase activity. Post-translationally, sumoylated. Ubiquitinated by RNF8 via 'Lys-48'-linked ubiquitination following DNA damage, leading to its degradation and removal from DNA damage sites. Ubiquitinated by RNF138, leading to remove the Ku complex from DNA breaks.

It localises to the nucleus. The protein resides in the nucleolus. It is found in the chromosome. Functionally, single-stranded DNA-dependent ATP-dependent helicase that plays a key role in DNA non-homologous end joining (NHEJ) by recruiting DNA-PK to DNA. Required for double-strand break repair and V(D)J recombination. Also has a role in chromosome translocation. The DNA helicase II complex binds preferentially to fork-like ends of double-stranded DNA in a cell cycle-dependent manner. It works in the 3'-5' direction. During NHEJ, the XRCC5-XRRC6 dimer performs the recognition step: it recognizes and binds to the broken ends of the DNA and protects them from further resection. Binding to DNA may be mediated by XRCC6. The XRCC5-XRRC6 dimer acts as a regulatory subunit of the DNA-dependent protein kinase complex DNA-PK by increasing the affinity of the catalytic subunit PRKDC to DNA by 100-fold. The XRCC5-XRRC6 dimer is probably involved in stabilizing broken DNA ends and bringing them together. The assembly of the DNA-PK complex to DNA ends is required for the NHEJ ligation step. The XRCC5-XRRC6 dimer probably also acts as a 5'-deoxyribose-5-phosphate lyase (5'-dRP lyase), by catalyzing the beta-elimination of the 5' deoxyribose-5-phosphate at an abasic site near double-strand breaks. XRCC5 probably acts as the catalytic subunit of 5'-dRP activity, and allows to 'clean' the termini of abasic sites, a class of nucleotide damage commonly associated with strand breaks, before such broken ends can be joined. The XRCC5-XRRC6 dimer together with APEX1 acts as a negative regulator of transcription. In association with NAA15, the XRCC5-XRRC6 dimer binds to the osteocalcin promoter and activates osteocalcin expression. As part of the DNA-PK complex, involved in the early steps of ribosome assembly by promoting the processing of precursor rRNA into mature 18S rRNA in the small-subunit processome. Binding to U3 small nucleolar RNA, recruits PRKDC and XRCC5/Ku86 to the small-subunit processome. Plays a role in the regulation of DNA virus-mediated innate immune response by assembling into the HDP-RNP complex, a complex that serves as a platform for IRF3 phosphorylation and subsequent innate immune response activation through the cGAS-STING pathway. In Mus musculus (Mouse), this protein is X-ray repair cross-complementing protein 5 (Xrcc5).